Consider the following 289-residue polypeptide: Light-independent protochlorophyllide reductase iron-sulfur ATP-binding protein (289 aa).

ATP contacts are provided by residues 10-15 and Lys39; that span reads GIGKST. Ser14 contacts Mg(2+). Positions 95 and 129 each coordinate [4Fe-4S] cluster. Residue 180-181 participates in ATP binding; sequence NR.

This sequence belongs to the NifH/BchL/ChlL family. In terms of assembly, homodimer. Protochlorophyllide reductase is composed of three subunits; ChlL, ChlN and ChlB. The cofactor is [4Fe-4S] cluster.

The protein resides in the plastid. It is found in the chloroplast. The catalysed reaction is chlorophyllide a + oxidized 2[4Fe-4S]-[ferredoxin] + 2 ADP + 2 phosphate = protochlorophyllide a + reduced 2[4Fe-4S]-[ferredoxin] + 2 ATP + 2 H2O. The protein operates within porphyrin-containing compound metabolism; chlorophyll biosynthesis (light-independent). Its function is as follows. Component of the dark-operative protochlorophyllide reductase (DPOR) that uses Mg-ATP and reduced ferredoxin to reduce ring D of protochlorophyllide (Pchlide) to form chlorophyllide a (Chlide). This reaction is light-independent. The L component serves as a unique electron donor to the NB-component of the complex, and binds Mg-ATP. This is Light-independent protochlorophyllide reductase iron-sulfur ATP-binding protein from Tetradesmus obliquus (Green alga).